Reading from the N-terminus, the 274-residue chain is Dermonecrotic toxin LspiSicTox-betaIII2 (274 aa).

The active site involves His-5. Glu-25 and Asp-27 together coordinate Mg(2+). Catalysis depends on His-41, which acts as the Nucleophile. Cystine bridges form between Cys-45–Cys-51 and Cys-47–Cys-189. Asp-85 provides a ligand contact to Mg(2+).

It belongs to the arthropod phospholipase D family. Class II subfamily. Mg(2+) is required as a cofactor. Expressed by the venom gland.

The protein resides in the secreted. The enzyme catalyses an N-(acyl)-sphingosylphosphocholine = an N-(acyl)-sphingosyl-1,3-cyclic phosphate + choline. It catalyses the reaction an N-(acyl)-sphingosylphosphoethanolamine = an N-(acyl)-sphingosyl-1,3-cyclic phosphate + ethanolamine. The catalysed reaction is a 1-acyl-sn-glycero-3-phosphocholine = a 1-acyl-sn-glycero-2,3-cyclic phosphate + choline. It carries out the reaction a 1-acyl-sn-glycero-3-phosphoethanolamine = a 1-acyl-sn-glycero-2,3-cyclic phosphate + ethanolamine. Dermonecrotic toxins cleave the phosphodiester linkage between the phosphate and headgroup of certain phospholipids (sphingolipid and lysolipid substrates), forming an alcohol (often choline) and a cyclic phosphate. This toxin acts on sphingomyelin (SM). It may also act on ceramide phosphoethanolamine (CPE), lysophosphatidylcholine (LPC) and lysophosphatidylethanolamine (LPE), but not on lysophosphatidylserine (LPS), and lysophosphatidylglycerol (LPG). It acts by transphosphatidylation, releasing exclusively cyclic phosphate products as second products. Induces dermonecrosis, hemolysis, increased vascular permeability, edema, inflammatory response, and platelet aggregation. This chain is Dermonecrotic toxin LspiSicTox-betaIII2, found in Loxosceles spinulosa (Recluse spider).